Here is a 135-residue protein sequence, read N- to C-terminus: Small ribosomal subunit protein uS12 (135 aa).

Residue Asp-89 is modified to 3-methylthioaspartic acid. The interval 108–135 (NKRTVSRSKYGTKKAKATDKKATDSKKK) is disordered. Over residues 111–122 (TVSRSKYGTKKA) the composition is skewed to basic residues. Residues 123 to 135 (KATDKKATDSKKK) show a composition bias toward basic and acidic residues.

It belongs to the universal ribosomal protein uS12 family. As to quaternary structure, part of the 30S ribosomal subunit. Contacts proteins S8 and S17. May interact with IF1 in the 30S initiation complex.

With S4 and S5 plays an important role in translational accuracy. Functionally, interacts with and stabilizes bases of the 16S rRNA that are involved in tRNA selection in the A site and with the mRNA backbone. Located at the interface of the 30S and 50S subunits, it traverses the body of the 30S subunit contacting proteins on the other side and probably holding the rRNA structure together. The combined cluster of proteins S8, S12 and S17 appears to hold together the shoulder and platform of the 30S subunit. This chain is Small ribosomal subunit protein uS12, found in Helicobacter pylori (strain HPAG1).